Here is a 403-residue protein sequence, read N- to C-terminus: Ribosomal RNA large subunit methyltransferase I (403 aa).

The PUA domain maps to 9-88 (YPRLVLSKGR…ESIDIAFFTR (80 aa)).

It belongs to the methyltransferase superfamily. RlmI family.

It localises to the cytoplasm. It catalyses the reaction cytidine(1962) in 23S rRNA + S-adenosyl-L-methionine = 5-methylcytidine(1962) in 23S rRNA + S-adenosyl-L-homocysteine + H(+). Its function is as follows. Specifically methylates the cytosine at position 1962 (m5C1962) of 23S rRNA. This chain is Ribosomal RNA large subunit methyltransferase I, found in Salmonella choleraesuis (strain SC-B67).